The sequence spans 309 residues: Taste receptor type 2 member 46 (309 aa).

Met1 is a topological domain (extracellular). A helical transmembrane segment spans residues 2–22 (ITFLPIIFSILIVVTFVIGNF). The Cytoplasmic segment spans residues 23–46 (ANGFIALANSIEWFKRQKISFADQ). A helical membrane pass occupies residues 47 to 67 (ILTALAVSRVGLLWVLLLNWY). The Extracellular portion of the chain corresponds to 68–86 (ATELNPAFYSIEVRITAYN). Residues 87–107 (VWAVISHFSNWLATSLSIFYL) traverse the membrane as a helical segment. The Cytoplasmic segment spans residues 108–126 (LKIANFSNLIFLRLKRRVK). Residues 127-147 (SVVLVILLGPLLFLVCHLFVI) form a helical membrane-spanning segment. Residues 148–178 (NMNQIIWTKEYEGNMTWKIKLRSAMYLSDTT) are Extracellular-facing. Asn161 is a glycosylation site (N-linked (GlcNAc...) asparagine). Residues 179-199 (VTILANLVPFTLTLISFLLLI) traverse the membrane as a helical segment. Over 200–229 (CSLCKHLKKMQLHGKGSQDPSMKVHIKALQ) the chain is Cytoplasmic. The helical transmembrane segment at 230-250 (TVTSFLLLCAIYFLSVIMSVW) threads the bilayer. Topologically, residues 251–259 (SFESLENKP) are extracellular. Residues 260–280 (VFMFCEAITFSYPSTHPFILI) form a helical membrane-spanning segment. The Cytoplasmic segment spans residues 281–309 (WGNKKLKQTFLSVLWHVRYWVKGEKPSSS).

The protein belongs to the G-protein coupled receptor T2R family.

It is found in the membrane. The protein resides in the cell projection. Its subcellular location is the cilium membrane. Its function is as follows. Receptor that may play a role in the perception of bitterness and is gustducin-linked. May play a role in sensing the chemical composition of the gastrointestinal content. The activity of this receptor may stimulate alpha gustducin, mediate PLC-beta-2 activation and lead to the gating of TRPM5. In airway epithelial cells, binding of bitter compounds increases the intracellular calcium ion concentration and stimulates ciliary beat frequency. The polypeptide is Taste receptor type 2 member 46 (TAS2R46) (Gorilla gorilla gorilla (Western lowland gorilla)).